Reading from the N-terminus, the 121-residue chain is Nitrogenase-stabilizing/protective protein NifW (121 aa).

The protein belongs to the NifW family. In terms of assembly, homotrimer; associates with NifD.

Functionally, may protect the nitrogenase Fe-Mo protein from oxidative damage. This chain is Nitrogenase-stabilizing/protective protein NifW, found in Leptothrix cholodnii (strain ATCC 51168 / LMG 8142 / SP-6) (Leptothrix discophora (strain SP-6)).